We begin with the raw amino-acid sequence, 410 residues long: Acetate kinase (410 aa).

Asn7 lines the Mg(2+) pocket. An ATP-binding site is contributed by Lys14. Arg88 is a binding site for substrate. The active-site Proton donor/acceptor is Asp145. Residues His203–Gly207, Asp278–Arg280, and Gly326–Asn330 contribute to the ATP site. Glu379 serves as a coordination point for Mg(2+).

This sequence belongs to the acetokinase family. Homodimer. The cofactor is Mg(2+). Requires Mn(2+) as cofactor.

The protein resides in the cytoplasm. The enzyme catalyses acetate + ATP = acetyl phosphate + ADP. It participates in metabolic intermediate biosynthesis; acetyl-CoA biosynthesis; acetyl-CoA from acetate: step 1/2. In terms of biological role, catalyzes the formation of acetyl phosphate from acetate and ATP. Can also catalyze the reverse reaction. The polypeptide is Acetate kinase (Aster yellows witches'-broom phytoplasma (strain AYWB)).